The chain runs to 302 residues: Melibiose operon regulatory protein (302 aa).

Residues 194 to 292 (SQMLGFIAEN…GMSPQQYRKL (99 aa)) form the HTH araC/xylS-type domain. 2 consecutive DNA-binding regions (H-T-H motif) follow at residues 211 to 232 (NDVAEHVKLNANYAMGIFQRVM) and 259 to 282 (ILDIALTAGFRSSSRFYSTFGKYV).

Its function is as follows. Transcription activator for the expression of the melAB operon. MelR binds at two sites located upstream of the melAB transcription site. This chain is Melibiose operon regulatory protein (melR), found in Escherichia coli O6:H1 (strain CFT073 / ATCC 700928 / UPEC).